Consider the following 197-residue polypeptide: Probable chorismate pyruvate-lyase (197 aa).

Substrate-binding residues include R77, L115, and E176.

It belongs to the UbiC family.

Its subcellular location is the cytoplasm. It carries out the reaction chorismate = 4-hydroxybenzoate + pyruvate. It participates in cofactor biosynthesis; ubiquinone biosynthesis. Removes the pyruvyl group from chorismate, with concomitant aromatization of the ring, to provide 4-hydroxybenzoate (4HB) for the ubiquinone pathway. This is Probable chorismate pyruvate-lyase from Burkholderia ambifaria (strain ATCC BAA-244 / DSM 16087 / CCUG 44356 / LMG 19182 / AMMD) (Burkholderia cepacia (strain AMMD)).